Here is a 386-residue protein sequence, read N- to C-terminus: Methionine aminotransferase (386 aa).

Lys236 is subject to N6-(pyridoxal phosphate)lysine.

It belongs to the class-I pyridoxal-phosphate-dependent aminotransferase family. As to quaternary structure, homodimer. The cofactor is pyridoxal 5'-phosphate.

It is found in the cytoplasm. It carries out the reaction a 2-oxocarboxylate + L-methionine = 4-methylsulfanyl-2-oxobutanoate + an L-alpha-amino acid. In terms of biological role, shows aminotransferase activity with methionine and histidine as substrates, and to a lesser extent also with phenylalanine. This chain is Methionine aminotransferase (ybdL), found in Escherichia coli (strain K12).